Reading from the N-terminus, the 242-residue chain is NAD(P)H-quinone oxidoreductase subunit K (242 aa).

Cys60, Cys61, Cys125, and Cys156 together coordinate [4Fe-4S] cluster.

Belongs to the complex I 20 kDa subunit family. In terms of assembly, NDH-1 can be composed of about 15 different subunits; different subcomplexes with different compositions have been identified which probably have different functions. It depends on [4Fe-4S] cluster as a cofactor.

It is found in the cellular thylakoid membrane. The catalysed reaction is a plastoquinone + NADH + (n+1) H(+)(in) = a plastoquinol + NAD(+) + n H(+)(out). The enzyme catalyses a plastoquinone + NADPH + (n+1) H(+)(in) = a plastoquinol + NADP(+) + n H(+)(out). Functionally, NDH-1 shuttles electrons from an unknown electron donor, via FMN and iron-sulfur (Fe-S) centers, to quinones in the respiratory and/or the photosynthetic chain. The immediate electron acceptor for the enzyme in this species is believed to be plastoquinone. Couples the redox reaction to proton translocation, and thus conserves the redox energy in a proton gradient. Cyanobacterial NDH-1 also plays a role in inorganic carbon-concentration. The polypeptide is NAD(P)H-quinone oxidoreductase subunit K (Prochlorococcus marinus (strain SARG / CCMP1375 / SS120)).